Here is a 164-residue protein sequence, read N- to C-terminus: Disulfide bond formation protein B (164 aa).

The Cytoplasmic segment spans residues 1–9 (MTLPSARTC). A helical transmembrane segment spans residues 10-26 (FLLGFLFCAALLAAALY). Residues 27–44 (FQFSGGLEPCPLCISQRI) are Periplasmic-facing. C36 and C39 form a disulfide bridge. A helical membrane pass occupies residues 45-61 (MVLAVALVFLAAAIHHP). Residues 62-68 (ASLGIRA) lie on the Cytoplasmic side of the membrane. A helical transmembrane segment spans residues 69–85 (YALLGTAVALGGASISG). Residues 86 to 142 (RHVWLLHLPPEEVPECGPGLSYMFRNFPLGDTLKAMLSGTGDCAKVDWTFLGLSMPA) are Periplasmic-facing. A disulfide bridge links C101 with C128. The helical transmembrane segment at 143-161 (WVLICFLGLGAFSLLQWWN) threads the bilayer. Topologically, residues 162 to 164 (AER) are cytoplasmic.

Belongs to the DsbB family.

It is found in the cell inner membrane. In terms of biological role, required for disulfide bond formation in some periplasmic proteins. Acts by oxidizing the DsbA protein. The sequence is that of Disulfide bond formation protein B from Methylococcus capsulatus (strain ATCC 33009 / NCIMB 11132 / Bath).